A 360-amino-acid polypeptide reads, in one-letter code: Chorismate synthase (360 aa).

NADP(+) is bound by residues R48 and R54. FMN is bound by residues 125-127 (RSS), 246-247 (NA), G286, 301-305 (KPTSS), and R327.

This sequence belongs to the chorismate synthase family. In terms of assembly, homotetramer. The cofactor is FMNH2.

It carries out the reaction 5-O-(1-carboxyvinyl)-3-phosphoshikimate = chorismate + phosphate. It participates in metabolic intermediate biosynthesis; chorismate biosynthesis; chorismate from D-erythrose 4-phosphate and phosphoenolpyruvate: step 7/7. Functionally, catalyzes the anti-1,4-elimination of the C-3 phosphate and the C-6 proR hydrogen from 5-enolpyruvylshikimate-3-phosphate (EPSP) to yield chorismate, which is the branch point compound that serves as the starting substrate for the three terminal pathways of aromatic amino acid biosynthesis. This reaction introduces a second double bond into the aromatic ring system. The protein is Chorismate synthase of Actinobacillus pleuropneumoniae serotype 7 (strain AP76).